We begin with the raw amino-acid sequence, 144 residues long: MTGEYKNTLDEKGRIMFPAKIRAELPDSNLVITRGVGNCLWIFTADKWKKFSDEIMKKTSLFKAQSLLVMRRLIAPAQEIEVDKNGRISIPQSLRECAGLEKDCIILGLGKCFELWDLKQYEKYLKESEPDFSEAAEALGEIGF.

2 SpoVT-AbrB domains span residues 4–47 (EYKN…TADK) and 77–120 (AQEI…DLKQ).

It belongs to the MraZ family. In terms of assembly, forms oligomers.

The protein resides in the cytoplasm. The protein localises to the nucleoid. This is Transcriptional regulator MraZ from Treponema denticola (strain ATCC 35405 / DSM 14222 / CIP 103919 / JCM 8153 / KCTC 15104).